Here is a 348-residue protein sequence, read N- to C-terminus: Beta-hexosaminidase (348 aa).

Substrate is bound by residues D64, R72, R138, and 168–169; that span reads KH. Catalysis depends on H181, which acts as the Proton donor/acceptor. The active-site Nucleophile is the D252.

It belongs to the glycosyl hydrolase 3 family. NagZ subfamily.

Its subcellular location is the cytoplasm. It catalyses the reaction Hydrolysis of terminal non-reducing N-acetyl-D-hexosamine residues in N-acetyl-beta-D-hexosaminides.. The protein operates within cell wall biogenesis; peptidoglycan recycling. Its function is as follows. Plays a role in peptidoglycan recycling by cleaving the terminal beta-1,4-linked N-acetylglucosamine (GlcNAc) from peptide-linked peptidoglycan fragments, giving rise to free GlcNAc, anhydro-N-acetylmuramic acid and anhydro-N-acetylmuramic acid-linked peptides. In Alkalilimnicola ehrlichii (strain ATCC BAA-1101 / DSM 17681 / MLHE-1), this protein is Beta-hexosaminidase.